A 367-amino-acid polypeptide reads, in one-letter code: Glutamate 5-kinase (367 aa).

K10 contributes to the ATP binding site. S50, D137, and N149 together coordinate substrate. ATP is bound by residues 169–170 (TD) and 211–217 (TGGMSTK). The PUA domain maps to 275-353 (AGEITVDEGA…QQIDAILGYE (79 aa)).

This sequence belongs to the glutamate 5-kinase family.

It localises to the cytoplasm. The catalysed reaction is L-glutamate + ATP = L-glutamyl 5-phosphate + ADP. It participates in amino-acid biosynthesis; L-proline biosynthesis; L-glutamate 5-semialdehyde from L-glutamate: step 1/2. Catalyzes the transfer of a phosphate group to glutamate to form L-glutamate 5-phosphate. The chain is Glutamate 5-kinase from Salmonella agona (strain SL483).